The sequence spans 309 residues: Beta-lactamase (309 aa).

Positions M1 to A28 are cleaved as a signal peptide. S92 (acyl-ester intermediate) is an active-site residue. Residue E188 is the Proton acceptor of the active site. A substrate-binding site is contributed by K254–G256.

The protein belongs to the class-A beta-lactamase family.

The catalysed reaction is a beta-lactam + H2O = a substituted beta-amino acid. Its function is as follows. This protein is a beta-lactamase with a substrate specificity for penicillins. The protein is Beta-lactamase (bla) of Bacillus thuringiensis.